Consider the following 298-residue polypeptide: Apolipoprotein E (298 aa).

Positions 1–18 (MKVLWAALVVTLLAGCRA) are cleaved as a signal peptide. Repeat copies occupy residues 74–95 (LLIE…KELG), 96–117 (PVAE…ARLG), 118–139 (ADME…AMLG), 140–161 (QSSE…RRLQ), 162–183 (RDID…EGAE), 184–204 (RGVS…RLQA), 205–222 (LASQ…EQMR), and 223–244 (GRLE…EQME). An 8 X 22 AA approximate tandem repeats region spans residues 74–244 (LLIEDTMKEV…RLEEVREQME (171 aa)). At M137 the chain carries Methionine sulfoxide. A Phosphoserine modification is found at S141. The segment at 152-162 (HPRKMKRRLQR) is LDL and other lipoprotein receptors binding. 156–159 (MKRR) provides a ligand contact to heparin. 218–225 (GEQMRGRL) is a binding site for heparin. The interval 260 to 272 (RLKSWFEPMMEDM) is specificity for association with VLDL.

The protein belongs to the apolipoprotein A1/A4/E family. As to quaternary structure, homotetramer. May interact with ABCA1; functionally associated with ABCA1 in the biogenesis of HDLs. May interact with APP/A4 amyloid-beta peptide; the interaction is extremely stable in vitro but its physiological significance is unclear. May interact with MAPT. May interact with MAP2. In the cerebrospinal fluid, interacts with secreted SORL1. Interacts with PMEL; this allows the loading of PMEL luminal fragment on ILVs to induce fibril nucleation. Post-translationally, APOE exists as multiple glycosylated and sialylated glycoforms within cells and in plasma. The extent of glycosylation and sialylation are tissue and context specific. In terms of processing, glycated in plasma VLDL. Phosphorylated by FAM20C in the extracellular medium.

The protein resides in the secreted. It localises to the extracellular space. The protein localises to the extracellular matrix. Its subcellular location is the extracellular vesicle. It is found in the endosome. The protein resides in the multivesicular body. APOE is an apolipoprotein, a protein associating with lipid particles, that mainly functions in lipoprotein-mediated lipid transport between organs via the plasma and interstitial fluids. APOE is a core component of plasma lipoproteins and is involved in their production, conversion and clearance. Apolipoproteins are amphipathic molecules that interact both with lipids of the lipoprotein particle core and the aqueous environment of the plasma. As such, APOE associates with chylomicrons, chylomicron remnants, very low density lipoproteins (VLDL) and intermediate density lipoproteins (IDL) but shows a preferential binding to high-density lipoproteins (HDL). It also binds a wide range of cellular receptors including the LDL receptor/LDLR and the very low-density lipoprotein receptor/VLDLR that mediate the cellular uptake of the APOE-containing lipoprotein particles. Finally, APOE also has a heparin-binding activity and binds heparan-sulfate proteoglycans on the surface of cells, a property that supports the capture and the receptor-mediated uptake of APOE-containing lipoproteins by cells. The polypeptide is Apolipoprotein E (APOE) (Cavia porcellus (Guinea pig)).